The following is a 655-amino-acid chain: Probable inactive receptor kinase At1g48480 (655 aa).

An N-terminal signal peptide occupies residues 1–32; that stretch reads MRVFFFPNSSMAILSVFLSLLLLSLPLPSTQD. LRR repeat units follow at residues 71–95, 98–120, 122–144, 146–169, 170–192, and 194–215; these read SNRV…IFGN, QLRT…LSTS, NLRH…LFSL, HLVR…TNLT, KLKT…DLPL, and QFNV…RFES. Residues 234 to 260 are disordered; it reads EETVPSQPTSGGNRTPPSVEGSEEKKK. A compositionally biased stretch (polar residues) spans 237–249; the sequence is VPSQPTSGGNRTP. A helical membrane pass occupies residues 269–289; the sequence is IAGIVIGCVVGFALIVLILMV. The 276-residue stretch at 371–646 folds into the Protein kinase domain; sequence RASAEVLGKG…RKMENLRPYS (276 aa). The residue at position 373 (Ser373) is a Phosphoserine. Position 377 to 385 (377 to 385) interacts with ATP; it reads LGKGTFGTA. Thr394 bears the Phosphothreonine mark. Lys399 is an ATP binding site. The residue at position 450 (Ser450) is a Phosphoserine. A Phosphothreonine modification is found at Thr526. Ser546 is modified (phosphoserine). Thr622 bears the Phosphothreonine mark.

This sequence belongs to the protein kinase superfamily. Highly expressed in seedlings and leaves. Lower expression in roots, stems, flowers and siliques. Detected in the vascular tissues of roots, in the trichomes of young rosettes leaves and hydathodes, in the floral abscission zones, in filament apex and stomata cells of anthers, in inflorescence stems and in sepals.

It is found in the cell membrane. The chain is Probable inactive receptor kinase At1g48480 (RKL1) from Arabidopsis thaliana (Mouse-ear cress).